The sequence spans 172 residues: NAD(P)H-quinone oxidoreductase subunit J (172 aa).

This sequence belongs to the complex I 30 kDa subunit family. In terms of assembly, NDH-1 can be composed of about 15 different subunits; different subcomplexes with different compositions have been identified which probably have different functions.

The protein localises to the cellular thylakoid membrane. It catalyses the reaction a plastoquinone + NADH + (n+1) H(+)(in) = a plastoquinol + NAD(+) + n H(+)(out). It carries out the reaction a plastoquinone + NADPH + (n+1) H(+)(in) = a plastoquinol + NADP(+) + n H(+)(out). In terms of biological role, NDH-1 shuttles electrons from an unknown electron donor, via FMN and iron-sulfur (Fe-S) centers, to quinones in the respiratory and/or the photosynthetic chain. The immediate electron acceptor for the enzyme in this species is believed to be plastoquinone. Couples the redox reaction to proton translocation, and thus conserves the redox energy in a proton gradient. Cyanobacterial NDH-1 also plays a role in inorganic carbon-concentration. This Synechococcus elongatus (strain ATCC 33912 / PCC 7942 / FACHB-805) (Anacystis nidulans R2) protein is NAD(P)H-quinone oxidoreductase subunit J.